We begin with the raw amino-acid sequence, 1212 residues long: Filamin-A-interacting protein 1 (1212 aa).

A compositionally biased stretch (polar residues) spans 1–15 (MRSRNQGGESSSNGH). Positions 1–73 (MRSRNQGGES…SEKKTKKSVE (73 aa)) are disordered. Basic and acidic residues-rich tracts occupy residues 32-47 (PSED…KEED) and 60-73 (PSGE…KSVE). Residue Ser137 is modified to Phosphoserine. 2 coiled-coil regions span residues 191–575 (DYMN…DELM) and 623–777 (PEDN…ELEL). Disordered stretches follow at residues 871–898 (WMRK…HPGE) and 948–975 (KPRI…GPER). Ser978 is subject to Phosphoserine. The tract at residues 1102-1190 (VSTGTVLRSP…TKFQPRAETQ (89 aa)) is disordered. Residues 1124 to 1138 (VTSTITITPVTTSST) show a composition bias toward low complexity. Residues 1139–1155 (RGTQSVSGQDGSSQRPT) are compositionally biased toward polar residues.

Belongs to the FILIP1 family. In terms of assembly, interacts with FLNA. Interacts with RHOD (in GTP-bound form). Expressed in muscle tissue, including heart. Found in cortical ventricular zone.

It localises to the cytoplasm. The protein resides in the cytoskeleton. It is found in the stress fiber. Functionally, by acting through a filamin-A/F-actin axis, it controls the start of neocortical cell migration from the ventricular zone. May be able to induce the degradation of Filamin A. This chain is Filamin-A-interacting protein 1 (Filip1), found in Rattus norvegicus (Rat).